Consider the following 338-residue polypeptide: Phenylalanine--tRNA ligase alpha subunit (338 aa).

A Mg(2+)-binding site is contributed by E252.

The protein belongs to the class-II aminoacyl-tRNA synthetase family. Phe-tRNA synthetase alpha subunit type 1 subfamily. As to quaternary structure, tetramer of two alpha and two beta subunits. Mg(2+) is required as a cofactor.

It is found in the cytoplasm. It carries out the reaction tRNA(Phe) + L-phenylalanine + ATP = L-phenylalanyl-tRNA(Phe) + AMP + diphosphate + H(+). The protein is Phenylalanine--tRNA ligase alpha subunit (pheS) of Aquifex aeolicus (strain VF5).